A 288-amino-acid polypeptide reads, in one-letter code: 4-diphosphocytidyl-2-C-methyl-D-erythritol kinase (288 aa).

The active site involves Lys-11. Residue 100–110 (PIAAGLGSGSS) participates in ATP binding. Residue Asp-140 is part of the active site.

It belongs to the GHMP kinase family. IspE subfamily.

The catalysed reaction is 4-CDP-2-C-methyl-D-erythritol + ATP = 4-CDP-2-C-methyl-D-erythritol 2-phosphate + ADP + H(+). It participates in isoprenoid biosynthesis; isopentenyl diphosphate biosynthesis via DXP pathway; isopentenyl diphosphate from 1-deoxy-D-xylulose 5-phosphate: step 3/6. Catalyzes the phosphorylation of the position 2 hydroxy group of 4-diphosphocytidyl-2C-methyl-D-erythritol. This Wolbachia pipientis wMel protein is 4-diphosphocytidyl-2-C-methyl-D-erythritol kinase.